The following is a 929-amino-acid chain: Ribonucleoside-diphosphate reductase large chain (929 aa).

An ATP-cone domain is found at M1–K92. ATP-binding positions include K5 to R6, E11 to K17, T53, and D57. GDP contacts are provided by S202 and S217. Cysteines 218 and 444 form a disulfide. DTTP-binding positions include D226 to I228, K243, R256, and A263 to G264. N427 contributes to the GDP binding site. N427 (proton acceptor) is an active-site residue. C429 (cysteine radical intermediate) is an active-site residue. GDP contacts are provided by residues E431 and T605–T608. The active-site Proton acceptor is E431. The disordered stretch occupies residues E789 to P904. Residues T800–I809 show a composition bias toward polar residues. A compositionally biased stretch (basic and acidic residues) spans V868–Q884. Residues N885–E894 show a composition bias toward acidic residues.

It belongs to the ribonucleoside diphosphate reductase large chain family.

It catalyses the reaction a 2'-deoxyribonucleoside 5'-diphosphate + [thioredoxin]-disulfide + H2O = a ribonucleoside 5'-diphosphate + [thioredoxin]-dithiol. Its activity is regulated as follows. Under complex allosteric control mediated by deoxynucleoside triphosphates and ATP binding to separate specificity and activation sites on the large subunit. The type of nucleotide bound at the specificity site determines substrate preference. It seems probable that ATP makes the enzyme reduce CDP and UDP, dGTP favors ADP reduction and dTTP favors GDP reduction. Stimulated by ATP and inhibited by dATP binding to the activity site. Its function is as follows. Provides the precursors necessary for DNA synthesis. Catalyzes the biosynthesis of deoxyribonucleotides from the corresponding ribonucleotides. This chain is Ribonucleoside-diphosphate reductase large chain (rnr-1), found in Neurospora crassa (strain ATCC 24698 / 74-OR23-1A / CBS 708.71 / DSM 1257 / FGSC 987).